The following is a 352-amino-acid chain: Fatty acid synthase (352 aa).

A Ketosynthase family 3 (KS3) domain is found at 1–352 (MEDVVIAGIA…KVVLSLEHGL (352 aa)). Active-site for beta-ketoacyl synthase activity residues include Cys161, His293, and His331.

As to quaternary structure, homodimer which monomers are arranged in a head to tail fashion.

It catalyses the reaction acetyl-CoA + n malonyl-CoA + 2n NADPH + 2n H(+) = a long-chain fatty acid + (n+1) CoA + n CO2 + 2n NADP(+).. Its function is as follows. Fatty acid synthetase catalyzes the formation of long-chain fatty acids from acetyl-CoA, malonyl-CoA and NADPH. This multifunctional protein has 7 catalytic activities as an acyl carrier protein. This is Fatty acid synthase (FASN) from Anser anser anser (Western greylag goose).